Reading from the N-terminus, the 362-residue chain is Acetylajmalan esterase 2 (362 aa).

A signal peptide spans 1 to 23 (MGFAARPFHIVFSLFVLAGATQA). The active-site Nucleophile is the serine 38. Asparagine 100, asparagine 118, asparagine 151, and asparagine 202 each carry an N-linked (GlcNAc...) asparagine glycan. Catalysis depends on residues aspartate 335 and histidine 338.

The protein belongs to the 'GDSL' lipolytic enzyme family. In terms of tissue distribution, confined to roots.

It carries out the reaction 17-O-acetylnorajmaline + H2O = norajmaline + acetate + H(+). The catalysed reaction is 17-O-acetylajmaline + H2O = ajmaline + acetate + H(+). It functions in the pathway alkaloid biosynthesis; ajmaline biosynthesis. Functionally, acetylesterase involved in the biosynthesis of ajmaline-type monoterpenoid indole alkaloids (MIAs) natural products, important plant-derived pharmaceuticals used in the therapy of heart disorders. Deacetylates 17-O-acetylnorajmaline to produce norajmaline. May also catalyze the conversion of 17-O-acetylajmaline to ajmaline. In Rauvolfia serpentina (Serpentine wood), this protein is Acetylajmalan esterase 2.